The primary structure comprises 176 residues: Conidiation-specific protein 8 (176 aa).

Disordered stretches follow at residues 1 to 66 (MDDT…SKLI) and 79 to 162 (AASE…PQGF). Residues 79-99 (AASEAFRSERSASTSSTTSET) show a composition bias toward low complexity.

This is Conidiation-specific protein 8 (con-8) from Neurospora crassa (strain ATCC 24698 / 74-OR23-1A / CBS 708.71 / DSM 1257 / FGSC 987).